The sequence spans 693 residues: Polyribonucleotide nucleotidyltransferase (693 aa).

2 residues coordinate Mg(2+): Asp-486 and Asp-492. The KH domain occupies 553–612 (PRFSSMRIDTEKIKDVIGKGGATIRSITEQTGTTIEIEDDGSVKIAATDKAAAANARRLI). The S1 motif domain maps to 622-690 (GRIYDAKVTK…RQGRVRLSIK (69 aa)).

The protein belongs to the polyribonucleotide nucleotidyltransferase family. As to quaternary structure, component of the RNA degradosome, which is a multiprotein complex involved in RNA processing and mRNA degradation. Mg(2+) is required as a cofactor.

Its subcellular location is the cytoplasm. It carries out the reaction RNA(n+1) + phosphate = RNA(n) + a ribonucleoside 5'-diphosphate. In terms of biological role, involved in mRNA degradation. Catalyzes the phosphorolysis of single-stranded polyribonucleotides processively in the 3'- to 5'-direction. The protein is Polyribonucleotide nucleotidyltransferase of Dichelobacter nodosus (strain VCS1703A).